The chain runs to 619 residues: Keratin, type II cytoskeletal 1 (619 aa).

The segment at 1-180 (MSRHFSSRSG…DPEIQKVKTR (180 aa)) is head. At Arg12 the chain carries Omega-N-methylarginine. Ser18 and Ser21 each carry phosphoserine. Residues 28 to 49 (QRRTTSSSVRHSGGGGGRFSGG) are disordered. The span at 39 to 49 (SGGGGGRFSGG) shows a compositional bias: gly residues. An Omega-N-methylarginine modification is found at Arg45. A Phosphoserine modification is found at Ser68. Residues 173–477 (EIQKVKTRER…ELMNTKLALD (305 aa)) adopt a coiled-coil conformation. Residues 181-216 (EREQIKSLNNQFASFIDKVRFLEQQNQVLQTKWELL) are coil 1A. Residues 181–494 (EREQIKSLNN…TLLEGEESRM (314 aa)) enclose the IF rod domain. The linker 1 stretch occupies residues 217–235 (QQVDTSTRTHSLEPYFENY). The tract at residues 236–327 (ISNLRRRVDQ…TLYQAELSQM (92 aa)) is coil 1B. The residue at position 277 (Lys277) is an N6,N6-dimethyllysine. The linker 12 stretch occupies residues 328–351 (QTQISETNVILSMDNNRSLDLDSI). Ser345 carries the post-translational modification Phosphoserine. A coil 2 region spans residues 352-490 (ISEVKAQYEE…ATYRTLLEGE (139 aa)). The tail stretch occupies residues 491–619 (ESRMSGECAP…VSTSYSRAVR (129 aa)). An omega-N-methylarginine mark is found at Arg519 and Arg575. Residues 559–619 (GGGGGGYGSS…VSTSYSRAVR (61 aa)) form a disordered region. Gly residues predominate over residues 573 to 595 (GHRGGSGGGSRSGGSSGGRGSSS). Positions 596 to 606 (GGIKTSSGSSS) are enriched in low complexity. Residues 607–619 (VKFVSTSYSRAVR) show a composition bias toward polar residues.

The protein belongs to the intermediate filament family. In terms of assembly, heterotetramer of two type I and two type II keratins. Heterodimer with KRT10. Two heterodimers of KRT1 and KRT10 form a heterotetramer. Forms a heterodimer with KRT14; the interaction is more abundant in the absence of KRT5. Interacts with ITGB1 in the presence of RACK1 and SRC, and with RACK1. Interacts with C1QBP; the association represents a cell surface kininogen receptor. Interacts with EPPK1; interaction is dependent of higher-order structure of intermediate filament. Undergoes deimination of some arginine residues (citrullination).

Its subcellular location is the cell membrane. It localises to the cytoplasm. In terms of biological role, may regulate the activity of kinases such as PKC and SRC via binding to integrin beta-1 (ITB1) and the receptor of activated protein C kinase 1 (RACK1). In complex with C1QBP is a high affinity receptor for kininogen-1/HMWK. In Canis lupus familiaris (Dog), this protein is Keratin, type II cytoskeletal 1.